A 284-amino-acid chain; its full sequence is MHAKMNGWAGVRLVTHCLNTRSRTYVALNMLAFARTPRGVPSCLFNKVWVSRYALVLILMVCASESSTSWAVTSNRLPNCSTITTTAGQDAELHGPAPLSCNVTQWGRYENGSTPVLWCTLWGSRTRVSLGHRVAFGCSWKTFFIYNVSESSGGTYYQKGYNCTDKHITLSCFNLTVVPRAVQSTTTVMTPTVVTNSTFSVSLVASRLTTNSSAFRHASYQRQQRVGNGTLSKNITNLAFTYGSWGVAMLLFAAVMVLVDLGLPQSAWRRWRSHVDDEERGLLM.

Asn79, Asn102, Asn111, Asn147, Asn162, Asn174, Asn196, Asn211, Asn228, and Asn234 each carry an N-linked (GlcNAc...) asparagine; by host glycan. The chain crosses the membrane as a helical span at residues 239-259 (AFTYGSWGVAMLLFAAVMVLV).

It belongs to the RL11 family.

It is found in the membrane. This is an uncharacterized protein from Human cytomegalovirus (strain AD169) (HHV-5).